A 246-amino-acid chain; its full sequence is Agamous-like MADS-box protein AGL5 (246 aa).

Positions Arg18 to Tyr72 constitute an MADS-box domain. The region spanning Thr102–Leu192 is the K-box domain.

In terms of assembly, interacts with AGL15 and AGL16.

The protein localises to the nucleus. In terms of biological role, probable transcription factor. Interacts genetically with TT16/AGL32 in a partially antagonistic manner during flower development. Is essential for the coordination of cell divisions in ovule, seed coat development and endosperm formation. The protein is Agamous-like MADS-box protein AGL5 (AGL5) of Arabidopsis thaliana (Mouse-ear cress).